Consider the following 255-residue polypeptide: Pimeloyl-[acyl-carrier protein] methyl ester esterase (255 aa).

Residues tryptophan 18, 78–79 (SL), and 139–143 (FLALD) each bind substrate. The active-site Nucleophile is the serine 78. Residues aspartate 203 and histidine 233 contribute to the active site. Histidine 233 lines the substrate pocket.

This sequence belongs to the AB hydrolase superfamily. Carboxylesterase BioH family. As to quaternary structure, monomer.

The protein localises to the cytoplasm. The catalysed reaction is 6-carboxyhexanoyl-[ACP] methyl ester + H2O = 6-carboxyhexanoyl-[ACP] + methanol + H(+). It participates in cofactor biosynthesis; biotin biosynthesis. In terms of biological role, the physiological role of BioH is to remove the methyl group introduced by BioC when the pimeloyl moiety is complete. It allows to synthesize pimeloyl-ACP via the fatty acid synthetic pathway through the hydrolysis of the ester bonds of pimeloyl-ACP esters. This chain is Pimeloyl-[acyl-carrier protein] methyl ester esterase, found in Xylella fastidiosa (strain M12).